We begin with the raw amino-acid sequence, 372 residues long: Chloromuconate cycloisomerase (372 aa).

Lys158 serves as the catalytic Proton acceptor. Residues Asp187, Glu213, and Asp238 each contribute to the Mn(2+) site. Glu316 serves as the catalytic Proton donor.

The protein belongs to the mandelate racemase/muconate lactonizing enzyme family. Mn(2+) serves as cofactor.

The catalysed reaction is 2-[(2R)-2-chloro-2,5-dihydro-5-oxofuryl]acetate = 3-chloro-cis,cis-muconate + H(+). The protein operates within aromatic compound metabolism; 3-chlorocatechol degradation. The sequence is that of Chloromuconate cycloisomerase (tfdDII) from Cupriavidus pinatubonensis (strain JMP 134 / LMG 1197) (Cupriavidus necator (strain JMP 134)).